The sequence spans 65 residues: Ferredoxin soy (65 aa).

The region spanning 2–29 (GVQVDKERCVGAGMCALTAPDVFTQDDD) is the 4Fe-4S ferredoxin-type domain. Residues Cys10, Cys16, and Cys55 each contribute to the [3Fe-4S] cluster site.

It depends on [3Fe-4S] cluster as a cofactor.

Electron transport protein for the cytochrome P-450-SOY system. The sequence is that of Ferredoxin soy (soyB) from Streptomyces griseus.